A 514-amino-acid polypeptide reads, in one-letter code: Protein farnesyltransferase subunit beta (514 aa).

The segment covering 1 to 13 has biased composition (basic residues); the sequence is MRHHTKNLRRRAI. The disordered stretch occupies residues 1–56; it reads MRHHTKNLRRRAIFLRTTPRGNMDSSSSVATSTSSSSNHRLVRSSEGSPSAGGDDI. Positions 25–39 are enriched in low complexity; the sequence is SSSSVATSTSSSSNH. PFTB repeat units lie at residues 180 to 221, 231 to 272, 293 to 334, 346 to 388, and 410 to 454; these read AESL…AVVG, RRAL…SLLN, FTGL…SLLG, IERL…PLIE, and REGL…SSAQ. (2E,6E)-farnesyl diphosphate is bound by residues 319–322 and 367–370; these read HGAY and RTNK. The Zn(2+) site is built by Asp-373 and Cys-375. 376-379 is a (2E,6E)-farnesyl diphosphate binding site; that stretch reads YSHW. His-442 provides a ligand contact to Zn(2+).

This sequence belongs to the protein prenyltransferase subunit beta family. In terms of assembly, heterodimer of an alpha and a beta subunit. Interacts with RAS1 and RAS2. The cofactor is Zn(2+). In terms of tissue distribution, highly expressed in mycelium, conidium, conidial germination, early formed appressorium and the late infection hypha.

It is found in the cytoplasm. The catalysed reaction is L-cysteinyl-[protein] + (2E,6E)-farnesyl diphosphate = S-(2E,6E)-farnesyl-L-cysteinyl-[protein] + diphosphate. Its function is as follows. Catalyzes the transfer of a farnesyl moiety from farnesyl diphosphate to a cysteine at the fourth position from the C-terminus of several proteins having the C-terminal sequence Cys-aliphatic-aliphatic-X. The beta subunit is responsible for peptide-binding. This chain is Protein farnesyltransferase subunit beta (RAM1), found in Pyricularia oryzae (strain 70-15 / ATCC MYA-4617 / FGSC 8958) (Rice blast fungus).